A 356-amino-acid chain; its full sequence is Fe(3+) ions import ATP-binding protein FbpC 2 (356 aa).

Positions 12–246 (LTVKNLNKFF…PNHLETAKFM (235 aa)) constitute an ABC transporter domain. 44 to 51 (GSSGCGKT) is a binding site for ATP.

The protein belongs to the ABC transporter superfamily. Fe(3+) ion importer (TC 3.A.1.10) family. In terms of assembly, the complex is composed of two ATP-binding proteins (FbpC), two transmembrane proteins (FbpB) and a solute-binding protein (FbpA).

It is found in the cell inner membrane. The enzyme catalyses Fe(3+)(out) + ATP + H2O = Fe(3+)(in) + ADP + phosphate + H(+). Its function is as follows. Part of the ABC transporter complex FbpABC involved in Fe(3+) ions import. Responsible for energy coupling to the transport system. The polypeptide is Fe(3+) ions import ATP-binding protein FbpC 2 (Haemophilus influenzae (strain ATCC 51907 / DSM 11121 / KW20 / Rd)).